A 638-amino-acid chain; its full sequence is Threonine--tRNA ligase (638 aa).

A TGS domain is found at 1–62; the sequence is MYQLTLPDKS…EKNSNIEVLT (62 aa). Residues 246 to 537 form a catalytic region; it reads DHRKIGKEMD…LIEHYEGKFP (292 aa). Zn(2+) contacts are provided by cysteine 337, histidine 388, and histidine 514.

This sequence belongs to the class-II aminoacyl-tRNA synthetase family. As to quaternary structure, homodimer. Zn(2+) serves as cofactor.

The protein resides in the cytoplasm. It catalyses the reaction tRNA(Thr) + L-threonine + ATP = L-threonyl-tRNA(Thr) + AMP + diphosphate + H(+). In terms of biological role, catalyzes the attachment of threonine to tRNA(Thr) in a two-step reaction: L-threonine is first activated by ATP to form Thr-AMP and then transferred to the acceptor end of tRNA(Thr). Also edits incorrectly charged L-seryl-tRNA(Thr). This is Threonine--tRNA ligase from Leptospira interrogans serogroup Icterohaemorrhagiae serovar copenhageni (strain Fiocruz L1-130).